A 142-amino-acid polypeptide reads, in one-letter code: Small heat shock protein IbpB (142 aa).

Positions alanine 26–arginine 137 constitute a sHSP domain.

This sequence belongs to the small heat shock protein (HSP20) family. As to quaternary structure, homodimer. Forms homomultimers of about 100-150 subunits at optimal growth temperatures. Conformation changes to oligomers at high temperatures or high ionic concentrations. The decrease in size of the multimers is accompanied by an increase in chaperone activity.

It is found in the cytoplasm. Functionally, associates with aggregated proteins, together with IbpA, to stabilize and protect them from irreversible denaturation and extensive proteolysis during heat shock and oxidative stress. Aggregated proteins bound to the IbpAB complex are more efficiently refolded and reactivated by the ATP-dependent chaperone systems ClpB and DnaK/DnaJ/GrpE. Its activity is ATP-independent. The protein is Small heat shock protein IbpB of Shigella boydii serotype 18 (strain CDC 3083-94 / BS512).